The sequence spans 340 residues: Tartrate-resistant acid phosphatase type 5 (340 aa).

A signal peptide spans 1–20 (MDTWTVLLILQASLVLPGAV). Residues Asp-41, Asp-79, Tyr-82, and Asn-118 each coordinate Fe cation. Residues Asn-124 and Asn-155 are each glycosylated (N-linked (GlcNAc...) asparagine). An intrachain disulfide couples Cys-169 to Cys-227. Positions 213, 248, and 250 each coordinate Fe cation.

Fe cation is required as a cofactor.

The protein localises to the secreted. It catalyses the reaction a phosphate monoester + H2O = an alcohol + phosphate. Functionally, uteroferrin is a phosphoprotein phosphatase, synthesized in response to progesterone. It appears to function in transplacental transport of iron in pig. This Sus scrofa (Pig) protein is Tartrate-resistant acid phosphatase type 5 (ACP5).